Consider the following 953-residue polypeptide: Dual serine/threonine and tyrosine protein kinase (953 aa).

The 262-residue stretch at 665-926 (PKLEREIGRG…VQSKLQDIYT (262 aa)) folds into the Protein kinase domain. Residues 671 to 679 (IGRGQYGVV) and Lys694 contribute to the ATP site. The active-site Proton acceptor is Asp791. The interval 932 to 953 (REAEGGGGGGAKEQQNLKSDTL) is disordered.

The protein belongs to the protein kinase superfamily. Ser/Thr protein kinase family.

Its subcellular location is the cytoplasm. The protein localises to the cell membrane. The protein resides in the apical cell membrane. It is found in the basolateral cell membrane. It localises to the cell junction. The enzyme catalyses L-seryl-[protein] + ATP = O-phospho-L-seryl-[protein] + ADP + H(+). It catalyses the reaction L-threonyl-[protein] + ATP = O-phospho-L-threonyl-[protein] + ADP + H(+). It carries out the reaction L-tyrosyl-[protein] + ATP = O-phospho-L-tyrosyl-[protein] + ADP + H(+). Its function is as follows. May act as a positive regulator of ERK phosphorylation downstream of fibroblast growth factor-receptor activation. May induce both caspase-dependent apoptosis and caspase-independent cell death. May play a role in the embryonic development. This is Dual serine/threonine and tyrosine protein kinase from Strongylocentrotus purpuratus (Purple sea urchin).